The primary structure comprises 521 residues: Bifunctional purine biosynthesis protein PurH (521 aa).

Positions 1-145 constitute an MGS-like domain; it reads MIKQALISVS…KNHRDVTVVV (145 aa).

Belongs to the PurH family.

The catalysed reaction is (6R)-10-formyltetrahydrofolate + 5-amino-1-(5-phospho-beta-D-ribosyl)imidazole-4-carboxamide = 5-formamido-1-(5-phospho-D-ribosyl)imidazole-4-carboxamide + (6S)-5,6,7,8-tetrahydrofolate. It catalyses the reaction IMP + H2O = 5-formamido-1-(5-phospho-D-ribosyl)imidazole-4-carboxamide. Its pathway is purine metabolism; IMP biosynthesis via de novo pathway; 5-formamido-1-(5-phospho-D-ribosyl)imidazole-4-carboxamide from 5-amino-1-(5-phospho-D-ribosyl)imidazole-4-carboxamide (10-formyl THF route): step 1/1. The protein operates within purine metabolism; IMP biosynthesis via de novo pathway; IMP from 5-formamido-1-(5-phospho-D-ribosyl)imidazole-4-carboxamide: step 1/1. This chain is Bifunctional purine biosynthesis protein PurH, found in Burkholderia ambifaria (strain ATCC BAA-244 / DSM 16087 / CCUG 44356 / LMG 19182 / AMMD) (Burkholderia cepacia (strain AMMD)).